We begin with the raw amino-acid sequence, 160 residues long: RTX-II toxin-activating lysine-acyltransferase ApxIIC (160 aa).

Active-site residues include His-23 and Asp-92.

This sequence belongs to the RTX toxin acyltransferase family. Homodimer.

The protein localises to the cytoplasm. It carries out the reaction a fatty acyl-[ACP] + L-lysyl-[protein] = N(6)-(fatty acyl)-L-lysyl-[protein] + holo-[ACP] + H(+). In terms of biological role, protein-lysine acyltransferase that catalyzes fatty acylation of the protoxin, thereby converting it to the active toxin. In Actinobacillus pleuropneumoniae (Haemophilus pleuropneumoniae), this protein is RTX-II toxin-activating lysine-acyltransferase ApxIIC (apxIIC).